We begin with the raw amino-acid sequence, 738 residues long: Interleukin-12 receptor subunit beta-1 (738 aa).

The first 19 residues, 1-19, serve as a signal peptide directing secretion; it reads MDMMGLAGTSKHITFLLLC. At 20 to 565 the chain is on the extracellular side; sequence QLGASGPGDG…QRFSFEVQIS (546 aa). 5 consecutive Fibronectin type-III domains span residues 47 to 152, 152 to 258, 259 to 359, 360 to 465, and 469 to 565; these read GPRN…TPPL, LGHI…PEVL, PQAK…LPAQ, ELTE…GNAS, and TPRH…VQIS. A glycan (N-linked (GlcNAc...) asparagine) is linked at N50. C53 and C63 are joined by a disulfide. Residues N73, N86, N130, N144, N169, and N188 are each glycosylated (N-linked (GlcNAc...) asparagine). Residues 244 to 248 carry the WSXWS motif motif; that stretch reads WSDWS. N330, N368, N374, N401, N463, and N477 each carry an N-linked (GlcNAc...) asparagine glycan. Residues 566 to 591 traverse the membrane as a helical segment; sequence RLSIIFASLGSFASVLLVGSLGYIGL. Topologically, residues 592–738 are cytoplasmic; that stretch reads NRAAWHLCPP…PGPPTLGQEA (147 aa). The Box 1 motif motif lies at 598 to 606; it reads LCPPLPTPC.

It belongs to the type I cytokine receptor family. Type 2 subfamily. As to quaternary structure, dimer or oligomer; disulfide-linked. Interacts with IL12RB2 to form the high affinity IL12 receptor. Heterodimer with IL23R; in presence of IL23. The heterodimer forms the IL23 receptor.

It localises to the membrane. Its function is as follows. Functions as an interleukin receptor which binds interleukin-12 with low affinity and is involved in IL12 transduction. Associated with IL12RB2 it forms a functional, high affinity receptor for IL12. Also associates with IL23R to form the interleukin-23 receptor which functions in IL23 signal transduction probably through activation of the Jak-Stat signaling cascade. The protein is Interleukin-12 receptor subunit beta-1 (Il12rb1) of Mus musculus (Mouse).